A 316-amino-acid polypeptide reads, in one-letter code: Transaldolase 2 (316 aa).

Lys131 functions as the Schiff-base intermediate with substrate in the catalytic mechanism.

The protein belongs to the transaldolase family. Type 1 subfamily. In terms of assembly, homodimer.

It is found in the cytoplasm. The catalysed reaction is D-sedoheptulose 7-phosphate + D-glyceraldehyde 3-phosphate = D-erythrose 4-phosphate + beta-D-fructose 6-phosphate. It participates in carbohydrate degradation; pentose phosphate pathway; D-glyceraldehyde 3-phosphate and beta-D-fructose 6-phosphate from D-ribose 5-phosphate and D-xylulose 5-phosphate (non-oxidative stage): step 2/3. Its function is as follows. Transaldolase is important for the balance of metabolites in the pentose-phosphate pathway. The chain is Transaldolase 2 from Salmonella paratyphi A (strain ATCC 9150 / SARB42).